The chain runs to 163 residues: D-aminoacyl-tRNA deacylase (163 aa).

Residues 141-142 (GP) carry the Gly-cisPro motif, important for rejection of L-amino acids motif.

It belongs to the DTD family. Homodimer.

The protein resides in the cytoplasm. It catalyses the reaction glycyl-tRNA(Ala) + H2O = tRNA(Ala) + glycine + H(+). The catalysed reaction is a D-aminoacyl-tRNA + H2O = a tRNA + a D-alpha-amino acid + H(+). In terms of biological role, an aminoacyl-tRNA editing enzyme that deacylates mischarged D-aminoacyl-tRNAs. Also deacylates mischarged glycyl-tRNA(Ala), protecting cells against glycine mischarging by AlaRS. Acts via tRNA-based rather than protein-based catalysis; rejects L-amino acids rather than detecting D-amino acids in the active site. By recycling D-aminoacyl-tRNA to D-amino acids and free tRNA molecules, this enzyme counteracts the toxicity associated with the formation of D-aminoacyl-tRNA entities in vivo and helps enforce protein L-homochirality. The protein is D-aminoacyl-tRNA deacylase of Neisseria gonorrhoeae (strain ATCC 700825 / FA 1090).